A 295-amino-acid polypeptide reads, in one-letter code: Probable protein phosphatase 2C 54 (295 aa).

The PPM-type phosphatase domain occupies 78–289 (GHGVVSVMGR…ENINVIVIDL (212 aa)). Mn(2+) contacts are provided by Asp-112, Gly-113, Asp-228, and Glu-280.

The protein belongs to the PP2C family. Mg(2+) serves as cofactor. The cofactor is Mn(2+).

It carries out the reaction O-phospho-L-seryl-[protein] + H2O = L-seryl-[protein] + phosphate. The catalysed reaction is O-phospho-L-threonyl-[protein] + H2O = L-threonyl-[protein] + phosphate. This chain is Probable protein phosphatase 2C 54, found in Arabidopsis thaliana (Mouse-ear cress).